A 255-amino-acid polypeptide reads, in one-letter code: Imidazole glycerol phosphate synthase subunit HisF (255 aa).

Active-site residues include D12 and D131.

The protein belongs to the HisA/HisF family. Heterodimer of HisH and HisF.

It is found in the cytoplasm. The catalysed reaction is 5-[(5-phospho-1-deoxy-D-ribulos-1-ylimino)methylamino]-1-(5-phospho-beta-D-ribosyl)imidazole-4-carboxamide + L-glutamine = D-erythro-1-(imidazol-4-yl)glycerol 3-phosphate + 5-amino-1-(5-phospho-beta-D-ribosyl)imidazole-4-carboxamide + L-glutamate + H(+). It functions in the pathway amino-acid biosynthesis; L-histidine biosynthesis; L-histidine from 5-phospho-alpha-D-ribose 1-diphosphate: step 5/9. In terms of biological role, IGPS catalyzes the conversion of PRFAR and glutamine to IGP, AICAR and glutamate. The HisF subunit catalyzes the cyclization activity that produces IGP and AICAR from PRFAR using the ammonia provided by the HisH subunit. This chain is Imidazole glycerol phosphate synthase subunit HisF, found in Neisseria gonorrhoeae (strain ATCC 700825 / FA 1090).